A 120-amino-acid chain; its full sequence is Large ribosomal subunit protein uL18 (120 aa).

This sequence belongs to the universal ribosomal protein uL18 family. As to quaternary structure, part of the 50S ribosomal subunit; part of the 5S rRNA/L5/L18/L25 subcomplex. Contacts the 5S and 23S rRNAs.

This is one of the proteins that bind and probably mediate the attachment of the 5S RNA into the large ribosomal subunit, where it forms part of the central protuberance. The polypeptide is Large ribosomal subunit protein uL18 (Azorhizobium caulinodans (strain ATCC 43989 / DSM 5975 / JCM 20966 / LMG 6465 / NBRC 14845 / NCIMB 13405 / ORS 571)).